We begin with the raw amino-acid sequence, 422 residues long: Glucosylglycerol-phosphate phosphatase (422 aa).

Aspartate 403 functions as the Proton donor in the catalytic mechanism.

Belongs to the histidine acid phosphatase family. Monomer. Interacts with GGPS.

The catalysed reaction is 2-O-(alpha-D-glucopyranosyl)-sn-glycerol 3-phosphate + H2O = 2-O-(alpha-D-glucopyranosyl)glycerol + phosphate. Phosphorylates glucosylglycerol-phosphate the precursor of the osmoprotectant glucosylglycerol necessary for salt adaptation of Synechocystis. The chain is Glucosylglycerol-phosphate phosphatase (stpA) from Synechocystis sp. (strain ATCC 27184 / PCC 6803 / Kazusa).